Reading from the N-terminus, the 166-residue chain is Regulatory protein RecX (166 aa).

This sequence belongs to the RecX family.

The protein localises to the cytoplasm. Modulates RecA activity. The chain is Regulatory protein RecX from Escherichia coli (strain K12 / MC4100 / BW2952).